A 314-amino-acid polypeptide reads, in one-letter code: DNA-directed RNA polymerase subunit alpha (314 aa).

The alpha N-terminal domain (alpha-NTD) stretch occupies residues 1-228 (MIEIEKPRIE…EHLNIFVSLT (228 aa)). The interval 245–314 (KEKVLEMSIE…DLGLGLRKED (70 aa)) is alpha C-terminal domain (alpha-CTD).

The protein belongs to the RNA polymerase alpha chain family. As to quaternary structure, homodimer. The RNAP catalytic core consists of 2 alpha, 1 beta, 1 beta' and 1 omega subunit. When a sigma factor is associated with the core the holoenzyme is formed, which can initiate transcription.

It carries out the reaction RNA(n) + a ribonucleoside 5'-triphosphate = RNA(n+1) + diphosphate. DNA-dependent RNA polymerase catalyzes the transcription of DNA into RNA using the four ribonucleoside triphosphates as substrates. The sequence is that of DNA-directed RNA polymerase subunit alpha from Staphylococcus epidermidis (strain ATCC 35984 / DSM 28319 / BCRC 17069 / CCUG 31568 / BM 3577 / RP62A).